A 463-amino-acid chain; its full sequence is Glycine--tRNA ligase (463 aa).

Substrate-binding residues include R100 and E175. Residues 207 to 209, 217 to 222, 291 to 292, and 335 to 338 each bind ATP; these read RNE, FRTREF, EL, and GADR. 222–226 provides a ligand contact to substrate; that stretch reads FEQME. 331–335 contacts substrate; it reads EPSLG.

Belongs to the class-II aminoacyl-tRNA synthetase family. Homodimer.

The protein resides in the cytoplasm. It carries out the reaction tRNA(Gly) + glycine + ATP = glycyl-tRNA(Gly) + AMP + diphosphate. Functionally, catalyzes the attachment of glycine to tRNA(Gly). The chain is Glycine--tRNA ligase from Clostridium beijerinckii (strain ATCC 51743 / NCIMB 8052) (Clostridium acetobutylicum).